The following is a 518-amino-acid chain: Sensor protein kinase HptS (518 aa).

2 consecutive transmembrane segments (helical) span residues 20-40 (IFPV…IYIW) and 222-242 (GITL…FGFI). The Histidine kinase domain maps to 297-513 (EQLIHSIEHT…LICYKIPLSR (217 aa)). Residue H325 is modified to Phosphohistidine; by autocatalysis.

Post-translationally, autophosphorylated.

The protein localises to the cell membrane. The enzyme catalyses ATP + protein L-histidine = ADP + protein N-phospho-L-histidine.. Its function is as follows. Member of the two-component regulatory system HptS/HptR that regulates genes involved in hexose phosphate transport system in response to changes in extracellular phosphate sources. May act as a sensor protein kinase which is autophosphorylated at a histidine residue and transfers its phosphate group to the conserved aspartic acid residue in the regulatory domain of HptS. In turn, HptS antagonizes CcpA-dependent transcription of a subset of CcpA-regulated genes involved in antibiotic susceptibility. The sequence is that of Sensor protein kinase HptS (hptS) from Staphylococcus aureus (strain MSSA476).